A 245-amino-acid chain; its full sequence is Phosphoadenosine 5'-phosphosulfate reductase (245 aa).

Cys239 functions as the Nucleophile; cysteine thiosulfonate intermediate in the catalytic mechanism.

This sequence belongs to the PAPS reductase family. CysH subfamily.

It localises to the cytoplasm. It catalyses the reaction [thioredoxin]-disulfide + sulfite + adenosine 3',5'-bisphosphate + 2 H(+) = [thioredoxin]-dithiol + 3'-phosphoadenylyl sulfate. Its pathway is sulfur metabolism; hydrogen sulfide biosynthesis; sulfite from sulfate: step 3/3. Functionally, catalyzes the formation of sulfite from phosphoadenosine 5'-phosphosulfate (PAPS) using thioredoxin as an electron donor. This is Phosphoadenosine 5'-phosphosulfate reductase from Alkalilimnicola ehrlichii (strain ATCC BAA-1101 / DSM 17681 / MLHE-1).